A 374-amino-acid chain; its full sequence is Lipoyl synthase, mitochondrial (374 aa).

[4Fe-4S] cluster contacts are provided by Cys101, Cys106, Cys112, Cys132, Cys136, Cys139, and Ser347. In terms of domain architecture, Radical SAM core spans Glu117–Leu336.

This sequence belongs to the radical SAM superfamily. Lipoyl synthase family. [4Fe-4S] cluster is required as a cofactor.

It localises to the mitochondrion. The catalysed reaction is [[Fe-S] cluster scaffold protein carrying a second [4Fe-4S](2+) cluster] + N(6)-octanoyl-L-lysyl-[protein] + 2 oxidized [2Fe-2S]-[ferredoxin] + 2 S-adenosyl-L-methionine + 4 H(+) = [[Fe-S] cluster scaffold protein] + N(6)-[(R)-dihydrolipoyl]-L-lysyl-[protein] + 4 Fe(3+) + 2 hydrogen sulfide + 2 5'-deoxyadenosine + 2 L-methionine + 2 reduced [2Fe-2S]-[ferredoxin]. It participates in protein modification; protein lipoylation via endogenous pathway; protein N(6)-(lipoyl)lysine from octanoyl-[acyl-carrier-protein]: step 2/2. Catalyzes the radical-mediated insertion of two sulfur atoms into the C-6 and C-8 positions of the octanoyl moiety bound to the lipoyl domains of lipoate-dependent enzymes, thereby converting the octanoylated domains into lipoylated derivatives. The polypeptide is Lipoyl synthase, mitochondrial (Drosophila pseudoobscura pseudoobscura (Fruit fly)).